A 179-amino-acid chain; its full sequence is Ribosome maturation factor RimM (179 aa).

The region spanning 96 to 175 (KDEYFWFDIE…IITVIGAMDI (80 aa)) is the PRC barrel domain.

Belongs to the RimM family. As to quaternary structure, binds ribosomal protein uS19.

It is found in the cytoplasm. An accessory protein needed during the final step in the assembly of 30S ribosomal subunit, possibly for assembly of the head region. Essential for efficient processing of 16S rRNA. May be needed both before and after RbfA during the maturation of 16S rRNA. It has affinity for free ribosomal 30S subunits but not for 70S ribosomes. This is Ribosome maturation factor RimM from Sulfurimonas denitrificans (strain ATCC 33889 / DSM 1251) (Thiomicrospira denitrificans (strain ATCC 33889 / DSM 1251)).